The following is a 127-amino-acid chain: Chondrosarcoma-associated gene 2/3 protein (127 aa).

Positions 68-127 (MSRKPRASSPLSNNHPPTPKRRGSGRHPLNPGPEALSKFPRQPGREKGPIKEVPGTKGSP) are disordered.

As to expression, weakly expressed in kidney. Expressed in various tumor cell lines including carcinomas, myeloid and lymphoid malignancies, melanomas and prostate cancer. Overexpressed in taxol-resistant breast cancer line MDA 435TR and the doxorubicin-resistant multiple myelanoma lines RPMI-8226/Dox40 and RPMI-8226/MDR10V.

Its function is as follows. Drug-resistance related protein, its expression is associated with the chemotherapy resistant and neoplastic phenotype. May also be linked to the malignant phenotype. This Homo sapiens (Human) protein is Chondrosarcoma-associated gene 2/3 protein (CSAG2).